Consider the following 396-residue polypeptide: Elongation factor Tu (396 aa).

In terms of domain architecture, tr-type G spans 10–206; that stretch reads KPHCNIGTIG…AVDEFIPQPT (197 aa). Residues 19 to 26 form a G1 region; sequence GHVDHGKT. 19 to 26 is a GTP binding site; that stretch reads GHVDHGKT. T26 is a Mg(2+) binding site. Residues 60–64 form a G2 region; the sequence is GITIS. The G3 stretch occupies residues 81 to 84; sequence DCPG. GTP-binding positions include 81–85 and 136–139; these read DCPGH and NKVD. A G4 region spans residues 136–139; it reads NKVD. The tract at residues 174–176 is G5; the sequence is SAL.

The protein belongs to the TRAFAC class translation factor GTPase superfamily. Classic translation factor GTPase family. EF-Tu/EF-1A subfamily. As to quaternary structure, monomer.

The protein localises to the cytoplasm. It carries out the reaction GTP + H2O = GDP + phosphate + H(+). In terms of biological role, GTP hydrolase that promotes the GTP-dependent binding of aminoacyl-tRNA to the A-site of ribosomes during protein biosynthesis. This Pelagibacter ubique (strain HTCC1062) protein is Elongation factor Tu.